The primary structure comprises 81 residues: Acyl carrier protein (81 aa).

A Carrier domain is found at 2-77 (ASVEEKVKQI…DAVDYITAHA (76 aa)). Residue Ser-37 is modified to O-(pantetheine 4'-phosphoryl)serine.

This sequence belongs to the acyl carrier protein (ACP) family. In terms of processing, 4'-phosphopantetheine is transferred from CoA to a specific serine of apo-ACP by AcpS. This modification is essential for activity because fatty acids are bound in thioester linkage to the sulfhydryl of the prosthetic group.

The protein localises to the cytoplasm. It functions in the pathway lipid metabolism; fatty acid biosynthesis. In terms of biological role, carrier of the growing fatty acid chain in fatty acid biosynthesis. The chain is Acyl carrier protein from Koribacter versatilis (strain Ellin345).